Reading from the N-terminus, the 296-residue chain is ATP-dependent ribose-1-phosphate kinase (296 aa).

Catalysis depends on Asp-242, which acts as the Proton acceptor.

The protein belongs to the carbohydrate kinase PfkB family. The cofactor is Mg(2+).

It carries out the reaction alpha-D-ribose 1-phosphate + ATP = alpha-D-ribose 1,5-bisphosphate + ADP + H(+). Requires salt for kinase activity. 2.0 M is the optimal KCl concentration. In terms of biological role, kinase involved in the non-carboxylating pentose bisphosphate pathway, a nucleoside degradation pathway present in some halophilic archaea. Catalyzes the ATP-dependent phosphorylation of ribose 1-phosphate (R1P) to ribose 1,5-bisphosphate (R15P). Shows weak activity towards various other phosphate acceptors, such as xylulose, 2'-deoxyguanosine and D-ribulose. ATP is the most preferred phosphate donor, followed by CTP and GTP. This chain is ATP-dependent ribose-1-phosphate kinase, found in Halopiger xanaduensis (strain DSM 18323 / JCM 14033 / SH-6).